Consider the following 310-residue polypeptide: Carbamate kinase 1 (310 aa).

The protein belongs to the carbamate kinase family.

The protein resides in the cytoplasm. It carries out the reaction hydrogencarbonate + NH4(+) + ATP = carbamoyl phosphate + ADP + H2O + H(+). It participates in metabolic intermediate metabolism; carbamoyl phosphate degradation; CO(2) and NH(3) from carbamoyl phosphate: step 1/1. This chain is Carbamate kinase 1 (arcC1), found in Staphylococcus aureus (strain COL).